Consider the following 317-residue polypeptide: MNPKHTPIDTTGLTPEMRSHVLAEALPWLLHYRDKIVVVKYGGNAMIDEDLKRAFAADMVFLRAIGARPVVVHGGGPQINEMLKTVGLEGEFKGGFRVTTPEVMEYVRMVLFGKVGRELVGLINEHGPYAVGASGEDAGLFTASKRMITVDGEEVDLGRVGQIEHVDAESLIDLIDAGRIPVVSTVAPDDQGRIYNINADTAAGALAGALGAERLVMLTNVKGLYTDWPNKESLVSSLTPEQLSDLLPNLDSGMVPKMEACLDALRSGVQAAHVIDGRIPHSVILELMTTGGIGTMICPAGWEDIASPDINYREDLP.

Substrate is bound by residues 75-76, R97, and N196; that span reads GG.

It belongs to the acetylglutamate kinase family. ArgB subfamily.

It localises to the cytoplasm. It catalyses the reaction N-acetyl-L-glutamate + ATP = N-acetyl-L-glutamyl 5-phosphate + ADP. It functions in the pathway amino-acid biosynthesis; L-arginine biosynthesis; N(2)-acetyl-L-ornithine from L-glutamate: step 2/4. Functionally, catalyzes the ATP-dependent phosphorylation of N-acetyl-L-glutamate. This is Acetylglutamate kinase from Corynebacterium jeikeium (strain K411).